The following is a 60-amino-acid chain: Colanic acid capsular biosynthesis activation protein B (60 aa).

The protein is Colanic acid capsular biosynthesis activation protein B (rcsB) of Klebsiella aerogenes (Enterobacter aerogenes).